A 635-amino-acid polypeptide reads, in one-letter code: Protein MICRORCHIDIA 1 (635 aa).

The disordered stretch occupies residues 491 to 511; the sequence is RTVIPDQPPTVNTYNPSPLPS. Residues 588–635 adopt a coiled-coil conformation; sequence MRCEEYVKKENEVEQTVKSLEKELEEIKSKCAQLALLVDAKKKEMQQV.

This sequence belongs to the MORC ATPase protein family. As to quaternary structure, homodimer and heterodimer with MORC6. Component of an RNA-directed DNA methylation (RdDM) complex that contains at least MORC6, MORC1/CRT1, MORC2, SWI3D and SUVH9. Binds directly to SUVH2 and SUVH9. Interacts with the resistance proteins RCY1, RPM1, SNC1, RPP8, SSI4 and RPS2. The interactions with various resistance proteins are disrupted when these resistance proteins are activated. Interacts with the PAMP recognition receptor FLS2. The cofactor is Mg(2+). Requires Mn(2+) as cofactor. Expressed constitutively.

It localises to the nucleus. The protein localises to the endosome. Mediator of defense signaling triggered by distinct classes of R proteins. Required during hypersensitive response (HR) that confers disease resistance to turnip crinkle virus (TCV). Exhibits ATPase activity. Contributes to resistance against Pseudomonas syringae and Hyaloperonospora arabidopsidis, at early stages prior to cytosolic calcium ions Ca(2+) accumulation. Required for pathogen-associated molecular pattern (PAMP)-triggered immunity (PTI), basal resistance, non-host resistance and systemic acquired resistance (SAR). Binds DNA/RNA in a non-specific manner and exhibits endonuclease activity. Probably involved in DNA repair. Required for both RPP8- and SSI4-mediated resistance responses, thus being involved in both TIR- and CC-NB-LRR pathways. Involved in RNA-directed DNA methylation (RdDM) as a component of the RdDM machinery and required for gene silencing. May also be involved in the regulation of chromatin architecture to maintain gene silencing. The sequence is that of Protein MICRORCHIDIA 1 from Arabidopsis thaliana (Mouse-ear cress).